The chain runs to 1299 residues: DNA-directed RNA polymerase subunit beta' (1299 aa).

Zn(2+) contacts are provided by Cys-60, Cys-62, Cys-75, and Cys-78. Positions 188 to 209 (GAKSDQKRRAKDGAEKEMGQTR) are disordered. Mg(2+)-binding residues include Asp-535, Asp-537, and Asp-539. Residues Cys-882, Cys-959, Cys-966, and Cys-969 each coordinate Zn(2+).

This sequence belongs to the RNA polymerase beta' chain family. In terms of assembly, the RNAP catalytic core consists of 2 alpha, 1 beta, 1 beta' and 1 omega subunit. When a sigma factor is associated with the core the holoenzyme is formed, which can initiate transcription. It depends on Mg(2+) as a cofactor. Zn(2+) serves as cofactor.

The catalysed reaction is RNA(n) + a ribonucleoside 5'-triphosphate = RNA(n+1) + diphosphate. Functionally, DNA-dependent RNA polymerase catalyzes the transcription of DNA into RNA using the four ribonucleoside triphosphates as substrates. The protein is DNA-directed RNA polymerase subunit beta' of Clavibacter sepedonicus (Clavibacter michiganensis subsp. sepedonicus).